The following is a 451-amino-acid chain: Phosphoglucosamine mutase (451 aa).

The active-site Phosphoserine intermediate is the serine 103. Mg(2+)-binding residues include serine 103, aspartate 243, aspartate 245, and aspartate 247. Residue serine 103 is modified to Phosphoserine.

This sequence belongs to the phosphohexose mutase family. Requires Mg(2+) as cofactor. Post-translationally, activated by phosphorylation.

It catalyses the reaction alpha-D-glucosamine 1-phosphate = D-glucosamine 6-phosphate. Its function is as follows. Catalyzes the conversion of glucosamine-6-phosphate to glucosamine-1-phosphate. This is Phosphoglucosamine mutase from Lactiplantibacillus plantarum (strain ATCC BAA-793 / NCIMB 8826 / WCFS1) (Lactobacillus plantarum).